A 189-amino-acid chain; its full sequence is Elongation factor P (189 aa).

The protein belongs to the elongation factor P family.

Its subcellular location is the cytoplasm. It participates in protein biosynthesis; polypeptide chain elongation. Its function is as follows. Involved in peptide bond synthesis. Stimulates efficient translation and peptide-bond synthesis on native or reconstituted 70S ribosomes in vitro. Probably functions indirectly by altering the affinity of the ribosome for aminoacyl-tRNA, thus increasing their reactivity as acceptors for peptidyl transferase. The chain is Elongation factor P from Rhizobium leguminosarum bv. trifolii (strain WSM2304).